The following is a 171-amino-acid chain: Mitochondrial import inner membrane translocase subunit Tim17-A (171 aa).

C9 and C78 are joined by a disulfide. Transmembrane regions (helical) follow at residues 17–37, 63–77, and 113–133; these read CGGA…FKGF, GGSF…STID, and VGSA…GILL. The disordered stretch occupies residues 147 to 171; that stretch reads FAEDHSQLPSSQLPSSPFGDYRQYQ. Residues 153–163 show a composition bias toward low complexity; sequence QLPSSQLPSSP.

Belongs to the Tim17/Tim22/Tim23 family. As to quaternary structure, component of the TIM23 complex at least composed of TIMM23, TIMM17 (TIMM17A or TIMM17B) and TIMM50. The complex interacts with the TIMM44 component of the PAM complex and with DNAJC15. Post-translationally, degraded by YMEL1 downstream of the integrated stress response (ISR).

It localises to the mitochondrion inner membrane. In terms of biological role, essential component of the TIM23 complex, a complex that mediates the translocation of transit peptide-containing proteins across the mitochondrial inner membrane. This is Mitochondrial import inner membrane translocase subunit Tim17-A (Timm17a) from Rattus norvegicus (Rat).